The sequence spans 1647 residues: Cortactin-binding protein 2 (1647 aa).

5 disordered regions span residues 1 to 27 (MATDGASCEPDASRAPEEAAGATAEAA), 202 to 222 (EKKKTNELEEELSAEKRRSTE), 318 to 427 (HVKK…QPGL), 440 to 468 (GNANDPDQNGNTTQSPPSRDVSPTSRDNL), and 482 to 604 (LSRF…PSID). Residues 120 to 276 (KMQERMATQL…EQLKRGSDSK (157 aa)) are a coiled coil. Positions 362 to 372 (SSAPSLPPASA) are enriched in low complexity. Polar residues predominate over residues 379 to 388 (GPSTGSTADL). The segment covering 389–411 (PSSTAPAPGSAAQSPVAAALGPA) has biased composition (low complexity). Positions 440 to 466 (GNANDPDQNGNTTQSPPSRDVSPTSRD) are enriched in polar residues. Arg484 is subject to Asymmetric dimethylarginine. The segment covering 488–509 (PAVGAAPRPGAPPTGDAGAYPP) has biased composition (low complexity). Polar residues predominate over residues 569–579 (TVASPPSSLPQ). ANK repeat units follow at residues 695–725 (GRPTLLQQAAAQGNVTLLSMLLNEEGLDINY), 729–758 (DGHSALYSAAKNGHTDCVRLLLNAEAQVNA), 762–791 (NGFTPLCAAAAQGHFECVELLIAYDANINH), 795–824 (GGQTPLYLACKNGNKECIKLLLEAGTDRSV), and 828–857 (DGWTPVHAAVDTGNVDSLKLLMYHRAPAHG). Positions 856-886 (HGNSLNEEEPESDVSDLDDGEESSEGESKPV) are disordered. The segment covering 861–880 (NEEEPESDVSDLDDGEESSE) has biased composition (acidic residues). Residues 898 to 928 (EGWTAAHIAASKGFKNCLEILCRHRGLEPER) form an ANK 6 repeat. The tract at residues 1436–1467 (ENGAWRKVNTSPRRKSGRFSSPTWNKPDLSNE) is disordered. Ser1509 carries the post-translational modification Phosphoserine. The interval 1542 to 1647 (RTFDSSGNNP…HKNEQTHRKT (106 aa)) is disordered. Composition is skewed to polar residues over residues 1544 to 1559 (FDSSGNNPAFSATVNN) and 1567 to 1584 (KEVSPLSSHQTTECSNNK). A compositionally biased stretch (low complexity) spans 1609-1623 (SQNTKRSSSSSNTRQ). Residues 1630-1647 (SKEENWNLHKNEQTHRKT) are compositionally biased toward basic and acidic residues.

Interacts with CTTN/cortactin SH3 domain. Interacts with STRN, STRN4/zinedin and MOB4/phocein; this interactions mediate the association with the STRIPAK core complex and may regulate dendritic spine distribution of the STRIPAK complex in hippocampal neurons. Activation of glutamate receptors weakens the interaction with STRN and STRN4.

The protein localises to the cytoplasm. It is found in the cell cortex. Its subcellular location is the cell projection. It localises to the dendritic spine. Its function is as follows. Regulates the dendritic spine distribution of CTTN/cortactin in hippocampal neurons, and thus controls dendritic spinogenesis and dendritic spine maintenance. Associates with the striatin-interacting phosphatase and kinase (STRIPAK) core complex to regulate dendritic spine distribution of the STRIPAK complex in hippocampal neurons. This is Cortactin-binding protein 2 (CTTNBP2) from Microcebus murinus (Gray mouse lemur).